The sequence spans 23 residues: Unknown protein NF016 from 2D-PAGE (23 aa).

This chain is Unknown protein NF016 from 2D-PAGE, found in Naegleria fowleri (Brain eating amoeba).